A 233-amino-acid chain; its full sequence is UPF0173 metal-dependent hydrolase Acid345_3437 (233 aa).

This sequence belongs to the UPF0173 family.

In Koribacter versatilis (strain Ellin345), this protein is UPF0173 metal-dependent hydrolase Acid345_3437.